Here is a 765-residue protein sequence, read N- to C-terminus: Glucosamine inositolphosphorylceramide transferase 1 (765 aa).

3 consecutive transmembrane segments (helical) span residues 43–63 (FFASCFGFYAFVAATYAWFVF), 394–414 (VILGYASLAAAISVVILLGFL), and 476–496 (MGKFTLGVIVILGLLLTCVGV). Substrate contacts are provided by residues N553, 577 to 582 (NSLNNR), 598 to 600 (DDD), R628, and 683 to 687 (FNCED). A Mn(2+)-binding site is contributed by D600. An intrachain disulfide couples C685 to C738. D687 is an active-site residue.

The protein belongs to the glycosyltransferase 64 family. The cofactor is Mn(2+). Specifically and highly expressed in developing embryos and mature seeds. Also detected at low levels in stigma and pollen.

It is found in the membrane. It carries out the reaction an N-(2R-hydroxy-very-long-chain fatty acyl)-(R)-4-hydroxysphingoid base + a 1,2-diacyl-sn-glycero-3-phospho-(1D-myo-inositol) = a 1D-myo-inositol-1-phospho-N-[(R)-2-hydroxy-very-long-chain fatty acyl]-(R)-4-hydroxysphingoid base + a 1,2-diacyl-sn-glycerol. Its pathway is sphingolipid metabolism. Glycosyltransferase that mediates the glycosylation of glycosylinositol phosphorylceramides (GIPCs), the major sphingolipids in the plasma membrane; acts as a HexN(Ac)-specific GIPC sugar transferase and accepts glucosamine (GlcN) and N-acetylglucosamine (GlcNAc) as the sugar unit. Responsible for the glycosylation of a subgroup of GIPCs found in seeds and pollen that contain GlcNAc and GlcN (GlcN(Ac)). Maybe involved in the maintenance of cell-cell adhesion. The sequence is that of Glucosamine inositolphosphorylceramide transferase 1 from Arabidopsis thaliana (Mouse-ear cress).